The following is a 159-amino-acid chain: Cytochrome c-type biogenesis protein CcmE (159 aa).

Topologically, residues 1–23 (MSSQSFHNSPSLRVILKQRKKKR) are cytoplasmic. The chain crosses the membrane as a helical; Signal-anchor for type II membrane protein span at residues 24-44 (LLIVLFCCLIIAIATSLITYA). Over 45–159 (LRNTVSFFRM…RLNKHHRVEK (115 aa)) the chain is Periplasmic. His138 and Tyr142 together coordinate heme.

Belongs to the CcmE/CycJ family.

The protein resides in the cell inner membrane. Functionally, heme chaperone required for the biogenesis of c-type cytochromes. Transiently binds heme delivered by CcmC and transfers the heme to apo-cytochromes in a process facilitated by CcmF and CcmH. The sequence is that of Cytochrome c-type biogenesis protein CcmE from Bartonella henselae (strain ATCC 49882 / DSM 28221 / CCUG 30454 / Houston 1) (Rochalimaea henselae).